A 430-amino-acid polypeptide reads, in one-letter code: MEHQGWSFEENYSLSTNRRSIRPQDELVELLWRDGQVVLQSQTHREQTQTQKQDHHEEALRSSTFLEDQETVSWIQYPPDEDPFEPDDFSSHFFSTMDPLQRPTSETVKPKSSPEPPQVMVKPKACPDPPPQVMPPPKFRLTNSSSGIRETEMEQYSVTTVGPSHCGSNPSQNDLDVSMSHDRSKNIEEKLNPNASSSSGGSSGCSFGKDIKEMASGRCITTDRKRKRINHTDESVSLSDAIGNKSNQRSGSNRRSRAAEVHNLSERRRRDRINERMKALQELIPHCSKTDKASILDEAIDYLKSLQLQLQVMWMGSGMAAAAASAPMMFPGVQPQQFIRQIQSPVQLPRFPVMDQSAIQNNPGLVCQNPVQNQIISDRFARYIGGFPHMQAATQMQPMEMLRFSSPAGQQSQQPSSVPTKTTDGSRLDH.

Disordered regions lie at residues 42–71 (QTHREQTQTQKQDHHEEALRSSTFLEDQET), 97–136 (MDPLQRPTSETVKPKSSPEPPQVMVKPKACPDPPPQVMPP), 160–183 (TVGPSHCGSNPSQNDLDVSMSHDR), 223–266 (DRKR…NLSE), and 405–430 (SSPAGQQSQQPSSVPTKTTDGSRLDH). Residues 43–60 (THREQTQTQKQDHHEEAL) show a composition bias toward basic and acidic residues. The segment covering 61–71 (RSSTFLEDQET) has biased composition (polar residues). The span at 126 to 136 (CPDPPPQVMPP) shows a compositional bias: pro residues. Polar residues predominate over residues 160 to 175 (TVGPSHCGSNPSQNDL). Positions 244–253 (NKSNQRSGSN) are enriched in low complexity. Over residues 257–266 (RAAEVHNLSE) the composition is skewed to basic and acidic residues. Positions 257 to 306 (RAAEVHNLSERRRRDRINERMKALQELIPHCSKTDKASILDEAIDYLKSL) constitute a bHLH domain. The span at 405 to 419 (SSPAGQQSQQPSSVP) shows a compositional bias: low complexity.

This sequence belongs to the bHLH protein family. In terms of assembly, interacts preferentially with the Pfr form of phytochrome B (phyB). Binds DNA as a homodimer, but once bound to DNA, loses its capacity to interact with phyB. Interacts with APRR1/TOC1 and PIF3. Binds to RGL2 and RGA. Forms non-functional heterodimer with HFR1. Interacts with PHYB, CRY1 and CRY2 in the nucleus in response to low blue light (LBL). Interacts with FYPP1 and FYPP3. Associates to PTAC12/HMR/PAP5, which acts as a transcriptional coactivator to trigger the thermoresponsive growth-relevant genes and promote warm-temperature-dependent PIF4 accumulation. Interacts with MED14. As to expression, mainly expressed in leaves, stems and seedlings, and, to a lower extent, in fruits, flowers and roots.

Its subcellular location is the nucleus. Its function is as follows. Transcription factor acting negatively in the phytochrome B signaling pathway. May regulate the expression of a subset of genes involved in cell expansion by binding to the G-box motif. Activated by CRY1 and CRY2 in response to low blue light (LBL) by direct binding at chromatin on E-box variant 5'-CA[CT]GTG-3' to stimulate specific gene expression to adapt global physiology (e.g. hypocotyl elongation in low blue light). Element of a PIF4/HMR/MED14-dependent thermoresponsive process; collaboratively with its transcriptional coactivator PTAC12/HMR/PAP5, involved in the regulation of thermoresponsive growth-relevant genes (e.g. mainly involved in biosynthesis and signaling of the phytohormone auxin) leading to daytime warm temperature elicitation of MED14-dependent thermomorphogenesis (e.g. hypocotyl elongation). The sequence is that of Transcription factor PIF4 from Arabidopsis thaliana (Mouse-ear cress).